We begin with the raw amino-acid sequence, 320 residues long: Malate dehydrogenase (320 aa).

NAD(+) contacts are provided by residues 10–15 and D34; that span reads GAGQIG. Positions 83 and 89 each coordinate substrate. NAD(+) is bound by residues N96 and 119-121; that span reads ITN. Substrate contacts are provided by N121 and R152. H176 serves as the catalytic Proton acceptor.

Belongs to the LDH/MDH superfamily. MDH type 3 family.

It carries out the reaction (S)-malate + NAD(+) = oxaloacetate + NADH + H(+). Functionally, catalyzes the reversible oxidation of malate to oxaloacetate. The protein is Malate dehydrogenase of Cereibacter sphaeroides (strain ATCC 17029 / ATH 2.4.9) (Rhodobacter sphaeroides).